Reading from the N-terminus, the 287-residue chain is S-methyl-5'-thioadenosine phosphorylase (287 aa).

Residues threonine 13 and 55-56 each bind phosphate; that span reads RH. Substrate is bound at residue methionine 186. Threonine 187 serves as a coordination point for phosphate. 210–212 is a substrate binding site; it reads DYD.

Belongs to the PNP/MTAP phosphorylase family. MTAP subfamily. As to quaternary structure, homohexamer. Dimer of a homotrimer.

It catalyses the reaction S-methyl-5'-thioadenosine + phosphate = 5-(methylsulfanyl)-alpha-D-ribose 1-phosphate + adenine. It participates in amino-acid biosynthesis; L-methionine biosynthesis via salvage pathway; S-methyl-5-thio-alpha-D-ribose 1-phosphate from S-methyl-5'-thioadenosine (phosphorylase route): step 1/1. Its function is as follows. Catalyzes the reversible phosphorylation of S-methyl-5'-thioadenosine (MTA) to adenine and 5-methylthioribose-1-phosphate. Involved in the breakdown of MTA, a major by-product of polyamine biosynthesis. Responsible for the first step in the methionine salvage pathway after MTA has been generated from S-adenosylmethionine. Has broad substrate specificity with 6-aminopurine nucleosides as preferred substrates. This is S-methyl-5'-thioadenosine phosphorylase from Leptospira interrogans serogroup Icterohaemorrhagiae serovar copenhageni (strain Fiocruz L1-130).